The chain runs to 533 residues: Probable nucleolar protein 5-1 (533 aa).

Residues 280 to 398 (IAPNLTALVG…LEARLRTLEG (119 aa)) form the Nop domain. The disordered stretch occupies residues 402 to 533 (GRLSGSAKGK…EKKKKKKTEV (132 aa)). The span at 412-423 (PKIEVYDKDKKK) shows a compositional bias: basic and acidic residues. Polar residues predominate over residues 433–450 (KTYNTAADSLLQTPTVDS). Composition is skewed to basic and acidic residues over residues 474–489 (TEEP…KTEA) and 515–524 (MPAKKKEKSE).

The protein belongs to the NOP5/NOP56 family.

The protein resides in the nucleus. It localises to the nucleolus. Functionally, required for 60S ribosomal subunit biogenesis. The polypeptide is Probable nucleolar protein 5-1 (NOP5-1) (Arabidopsis thaliana (Mouse-ear cress)).